The sequence spans 423 residues: GTPase HflX (423 aa).

Residues 201-363 enclose the Hflx-type G domain; the sequence is IQLALVGYTN…KIEQALKGMM (163 aa). GTP contacts are provided by residues 207–214, 232–236, 254–257, 320–323, and 341–343; these read GYTNAGKS, FATLD, DTVG, NKAD, and SAY. 2 residues coordinate Mg(2+): S214 and T234.

It belongs to the TRAFAC class OBG-HflX-like GTPase superfamily. HflX GTPase family. In terms of assembly, monomer. Associates with the 50S ribosomal subunit. Mg(2+) is required as a cofactor.

The protein localises to the cytoplasm. GTPase that associates with the 50S ribosomal subunit and may have a role during protein synthesis or ribosome biogenesis. In Alkalihalophilus pseudofirmus (strain ATCC BAA-2126 / JCM 17055 / OF4) (Bacillus pseudofirmus), this protein is GTPase HflX.